The sequence spans 126 residues: Large ribosomal subunit protein bL20c (126 aa).

Belongs to the bacterial ribosomal protein bL20 family.

The protein localises to the plastid. Its subcellular location is the chloroplast. In terms of biological role, binds directly to 23S ribosomal RNA and is necessary for the in vitro assembly process of the 50S ribosomal subunit. It is not involved in the protein synthesizing functions of that subunit. This Illicium oligandrum (Star anise) protein is Large ribosomal subunit protein bL20c.